Reading from the N-terminus, the 206-residue chain is Ribosomal RNA small subunit methyltransferase G (206 aa).

S-adenosyl-L-methionine-binding positions include G73, L78, 124 to 125 (VE), and R139.

The protein belongs to the methyltransferase superfamily. RNA methyltransferase RsmG family.

It localises to the cytoplasm. It carries out the reaction guanosine(527) in 16S rRNA + S-adenosyl-L-methionine = N(7)-methylguanosine(527) in 16S rRNA + S-adenosyl-L-homocysteine. Its function is as follows. Specifically methylates the N7 position of guanine in position 527 of 16S rRNA. This is Ribosomal RNA small subunit methyltransferase G from Serratia proteamaculans (strain 568).